A 349-amino-acid chain; its full sequence is 4-hydroxy-tetrahydrodipicolinate reductase 2, chloroplastic (349 aa).

Residues 1–53 (MAANGLMAASSVFLHRPVHPHFSFSSRTNQMVPLGFKGRVSFIGNVKRCFPVV) constitute a chloroplast transit peptide. NAD(+) contacts are provided by residues 81-86 (GCSGKM), 173-175 (GTT), and 196-199 (SPQM). The active-site Proton donor/acceptor is the His-232. Lys-236 acts as the Proton donor in catalysis. Position 241–242 (241–242 (GT)) interacts with (S)-2,3,4,5-tetrahydrodipicolinate.

It belongs to the DapB family.

It localises to the plastid. The protein localises to the chloroplast. The catalysed reaction is (S)-2,3,4,5-tetrahydrodipicolinate + NAD(+) + H2O = (2S,4S)-4-hydroxy-2,3,4,5-tetrahydrodipicolinate + NADH + H(+). The enzyme catalyses (S)-2,3,4,5-tetrahydrodipicolinate + NADP(+) + H2O = (2S,4S)-4-hydroxy-2,3,4,5-tetrahydrodipicolinate + NADPH + H(+). It participates in amino-acid biosynthesis; L-lysine biosynthesis via DAP pathway; (S)-tetrahydrodipicolinate from L-aspartate: step 4/4. Functionally, catalyzes the conversion of 4-hydroxy-tetrahydrodipicolinate (HTPA) to tetrahydrodipicolinate. This chain is 4-hydroxy-tetrahydrodipicolinate reductase 2, chloroplastic (DAPB2), found in Arabidopsis thaliana (Mouse-ear cress).